The chain runs to 414 residues: NADH-dependent flavin oxidoreductase iccE (414 aa).

Residues threonine 25–alanine 28 and glutamine 107 each bind FMN. Histidine 188–histidine 191 lines the substrate pocket. Alanine 347–arginine 348 contacts FMN.

It belongs to the NADH:flavin oxidoreductase/NADH oxidase family.

The catalysed reaction is 8-epi-ilicicolin H = ilicicolin H. Its pathway is mycotoxin biosynthesis. Functionally, NADH-dependent flavin oxidoreductase; part of the gene cluster that mediates the biosynthesis of ilicicolin H, a 4-hydroxy-2-pyridonealkaloid that has potent and broad antifungal activities by inhibiting the mitochondrial respiration chain. IccE acts as an epimerase and catalyzes the conversion of 8-epi-ilicicolin H into the final product ilicicolin H. The biosynthesis of ilicicolin H starts with formation of the tetramic acid by the hybrid PKS-NRPS synthetase iccA with the partnering trans-enoyl reductase iccB since iccA lacks a designated enoylreductase (ER) domain. The cytochrome P450 monooxygenase iccC then catalyzes the ring expansion of the tetramate to the acyclic 2-pyridone. The pericyclase iccD further converts the acyclic 2-pyridone into 8-epi-ilicicolin H. Finally, the epimerase iccE converts 8-epi-ilicicolin H into ilicicolin H via epimerization. IccA to iccE are sufficient for ilicicolin H biosynthesis and the roles of the remaining enzymes, iccF, iccG and iccH within the pathway have still to be determined. This Talaromyces variabilis (Penicillium variabile) protein is NADH-dependent flavin oxidoreductase iccE.